Consider the following 120-residue polypeptide: NAD(P)H-quinone oxidoreductase subunit 3, chloroplastic (120 aa).

3 helical membrane-spanning segments follow: residues 7 to 27 (YDYF…IFSL), 64 to 84 (MFAL…PWAM), and 89 to 109 (FGIS…IGLV).

It belongs to the complex I subunit 3 family. NDH is composed of at least 16 different subunits, 5 of which are encoded in the nucleus.

It is found in the plastid. The protein resides in the chloroplast thylakoid membrane. The enzyme catalyses a plastoquinone + NADH + (n+1) H(+)(in) = a plastoquinol + NAD(+) + n H(+)(out). It catalyses the reaction a plastoquinone + NADPH + (n+1) H(+)(in) = a plastoquinol + NADP(+) + n H(+)(out). Functionally, NDH shuttles electrons from NAD(P)H:plastoquinone, via FMN and iron-sulfur (Fe-S) centers, to quinones in the photosynthetic chain and possibly in a chloroplast respiratory chain. The immediate electron acceptor for the enzyme in this species is believed to be plastoquinone. Couples the redox reaction to proton translocation, and thus conserves the redox energy in a proton gradient. This is NAD(P)H-quinone oxidoreductase subunit 3, chloroplastic from Marchantia polymorpha (Common liverwort).